A 121-amino-acid polypeptide reads, in one-letter code: Large ribosomal subunit protein bL12 (121 aa).

This sequence belongs to the bacterial ribosomal protein bL12 family. As to quaternary structure, homodimer. Part of the ribosomal stalk of the 50S ribosomal subunit. Forms a multimeric L10(L12)X complex, where L10 forms an elongated spine to which 2 to 4 L12 dimers bind in a sequential fashion. Binds GTP-bound translation factors.

Forms part of the ribosomal stalk which helps the ribosome interact with GTP-bound translation factors. Is thus essential for accurate translation. This is Large ribosomal subunit protein bL12 from Streptococcus agalactiae serotype V (strain ATCC BAA-611 / 2603 V/R).